Here is a 248-residue protein sequence, read N- to C-terminus: UPF0736 protein BCB4264_A1231 (248 aa).

It belongs to the UPF0736 family.

The chain is UPF0736 protein BCB4264_A1231 from Bacillus cereus (strain B4264).